A 253-amino-acid polypeptide reads, in one-letter code: Acetylglutamate kinase (253 aa).

Residues Gly40 to Gly41, Arg62, and Asn154 contribute to the substrate site.

Belongs to the acetylglutamate kinase family. ArgB subfamily.

The protein resides in the cytoplasm. The catalysed reaction is N-acetyl-L-glutamate + ATP = N-acetyl-L-glutamyl 5-phosphate + ADP. It participates in amino-acid biosynthesis; L-arginine biosynthesis; N(2)-acetyl-L-ornithine from L-glutamate: step 2/4. In terms of biological role, catalyzes the ATP-dependent phosphorylation of N-acetyl-L-glutamate. The polypeptide is Acetylglutamate kinase (Staphylococcus saprophyticus subsp. saprophyticus (strain ATCC 15305 / DSM 20229 / NCIMB 8711 / NCTC 7292 / S-41)).